We begin with the raw amino-acid sequence, 182 residues long: UPF0200 protein Mboo_1593 (182 aa).

8-15 (GLPASGKG) is a binding site for ATP.

This sequence belongs to the UPF0200 family.

This Methanoregula boonei (strain DSM 21154 / JCM 14090 / 6A8) protein is UPF0200 protein Mboo_1593.